Consider the following 352-residue polypeptide: Ribosomal RNA large subunit methyltransferase M (352 aa).

S-adenosyl-L-methionine-binding positions include Ser-184, 217-220, Asp-236, Asp-256, and Asp-272; that span reads APGG. Lys-301 (proton acceptor) is an active-site residue.

Belongs to the class I-like SAM-binding methyltransferase superfamily. RNA methyltransferase RlmE family. RlmM subfamily. Monomer.

The protein localises to the cytoplasm. The catalysed reaction is cytidine(2498) in 23S rRNA + S-adenosyl-L-methionine = 2'-O-methylcytidine(2498) in 23S rRNA + S-adenosyl-L-homocysteine + H(+). Catalyzes the 2'-O-methylation at nucleotide C2498 in 23S rRNA. This Pseudomonas aeruginosa (strain LESB58) protein is Ribosomal RNA large subunit methyltransferase M.